The chain runs to 227 residues: Charged multivesicular body protein 4b (227 aa).

2 disordered regions span residues 1 to 26 (MSGILGKLFGAGAGGKGAGKGPSPQE) and 186 to 227 (SGPE…AGNM). Over residues 9–20 (FGAGAGGKGAGK) the composition is skewed to gly residues. The stretch at 25–185 (QEAIQRLRDT…EELDKNLLEI (161 aa)) forms a coiled coil.

Belongs to the SNF7 family. As to quaternary structure, probable core component of the endosomal sorting required for transport complex III (ESCRT-III). ESCRT-III components are thought to multimerize to form a flat lattice on the perimeter membrane of the endosome.

It is found in the cytoplasm. The protein resides in the cytosol. Its subcellular location is the late endosome membrane. It localises to the midbody. Its function is as follows. Probable core component of the endosomal sorting required for transport complex III (ESCRT-III) which is involved in multivesicular bodies (MVBs) formation and sorting of endosomal cargo proteins into MVBs. MVBs contain intraluminal vesicles (ILVs) that are generated by invagination and scission from the limiting membrane of the endosome and mostly are delivered to lysosomes enabling degradation of membrane proteins, such as stimulated growth factor receptors, lysosomal enzymes and lipids. The protein is Charged multivesicular body protein 4b (CHMP4B) of Gallus gallus (Chicken).